The sequence spans 513 residues: MGFFIQHGLTKPEILYPFLFGIFAVASLCIATLLFPASFSAASRVISWVLSIYLEVKNPIRHTETGRNIPGPSYVWPNGQGDIEKYVQGRSRSEQWQRKYGNVYRIWAGMTPEVVLTRPEQLHAIFKDSDKHTKATNSDSGYFMSRILGQCLGLMAGPRWKLLKGIAAPPFMHPTAVRSIGRIQEHVRAHFHDLETNGNLREGRIHPVQDLKMLPFFIVAEANYGSLTPAMKSELDSLAPARENLMKFVLFGGLARFNISRFFPTEANRQLRRFRSQWRAFNRAAYERAREKHPSAMVVQMYDAVHKGVLTEEQVAQTMDETLYANLDVTTGGLSWNLVFLAANPACQARLHEEISALTPAEEEGYISRNGTYLAACVLESSRLRPALPFTIPQSAPTERVVDGYRIPAGTNYVVDTWGLNVRDEFWAPDNSTYRPERFLNSSNTDLRYHFWRFGFGPRQCIGRYTADVVIRAILLHLVKHYELQMLEEGDFTQDPECWITHPDLQVKCVRRT.

A helical membrane pass occupies residues 14–34; that stretch reads ILYPFLFGIFAVASLCIATLL. 4 N-linked (GlcNAc...) asparagine glycosylation sites follow: asparagine 258, asparagine 370, asparagine 431, and asparagine 441. Cysteine 461 provides a ligand contact to heme.

Belongs to the cytochrome P450 family. Heme is required as a cofactor.

It is found in the membrane. The protein operates within secondary metabolite biosynthesis. Functionally, cytochrome P450 monooxygenase; part of the gene cluster that mediates the biosynthesis of aspergillic acid, a hydroxamic acid-containing pyrazinone with aliphatic side chains that originates from leucine (Leu) and isoleucine (Ile). Aspergillic acid has antibiotic properties and was shown to be lethal to mice. The first step in the pathway is the production of deoxyaspergillic acid via a condensation between the Ile amine and the Leu carboxylic acid, followed by a reductive release from the protein forming the dipeptide aldehyde NH(2)-Leu-Ile-CHO, which could undergo an intermolecular cyclization resulting in a dihydropyrazinone. As the NRPS asaC lacks a condensation domain, it is improbable that it is responsible for condensation of Leu and Ile. One possibility is that asaC acts on a previously condensed dipeptide and functions as a Leu-Ile reductase to yield deoxyaspergillic acid. After asaC forms deoxyaspergillic acid, the cytochrome P450 asaD oxidizes the pyrazinone to the hydroxamic acid-containing bioactive metabolite aspergillic acid. The hydroxylase/desaturase asaB can then convert aspergillic acid to hydroxyaspergillic acid. Both aspergillic acid and hydroxyaspergillic acid can form complexes with iron producing ferriaspergillin analogs. This Aspergillus flavus (strain ATCC 200026 / FGSC A1120 / IAM 13836 / NRRL 3357 / JCM 12722 / SRRC 167) protein is Cytochrome P450 monooxygenase asaD.